The sequence spans 147 residues: UPF0208 membrane protein PM0703 (147 aa).

The next 2 membrane-spanning stretches (helical) occupy residues 32–52 (VIKA…FAIT) and 65–85 (LAIA…GLYW).

Belongs to the UPF0208 family.

The protein resides in the cell inner membrane. The polypeptide is UPF0208 membrane protein PM0703 (Pasteurella multocida (strain Pm70)).